We begin with the raw amino-acid sequence, 218 residues long: Glutathione S-transferase Mu 2 (218 aa).

Positions 2 to 88 (PMTLGYWDIR…YLARKHNLCG (87 aa)) constitute a GST N-terminal domain. 7–8 (YW) contacts glutathione. S27 and S44 each carry phosphoserine. Glutathione is bound by residues 43–46 (RSQW), K50, 59–60 (NL), and 72–73 (QS). In terms of domain architecture, GST C-terminal spans 90-208 (TEEERIRVDI…KSSRFLSKPI (119 aa)). A substrate-binding site is contributed by Y116. The residue at position 117 (S117) is a Phosphoserine.

The protein belongs to the GST superfamily. Mu family. Homodimer.

Its subcellular location is the cytoplasm. The catalysed reaction is RX + glutathione = an S-substituted glutathione + a halide anion + H(+). The enzyme catalyses 11(S)-hydroxy-14(S),15(S)-epoxy-(5Z,8Z,12E)-eicosatrienoate + glutathione = (11S,15S)-dihydroxy-14(R)-S-glutathionyl-(5Z,8Z,12E)-eicosatrienoate. Functionally, conjugation of reduced glutathione to a wide number of exogenous and endogenous hydrophobic electrophiles. Participates in the formation of novel hepoxilin regioisomers. The sequence is that of Glutathione S-transferase Mu 2 from Mus musculus (Mouse).